A 302-amino-acid chain; its full sequence is TATA-box-binding protein (302 aa).

Disordered stretches follow at residues Met1–Thr22 and Ser50–Gln81. A compositionally biased stretch (low complexity) spans Ser50–Gly70. Tandem repeats lie at residues Leu128–Val204 and Ile218–Leu295.

The protein belongs to the TBP family. In terms of tissue distribution, enriched in testis but hardly detectable in the ovary (at protein level).

The protein localises to the nucleus. Functionally, general transcription factor that functions at the core of the DNA-binding multiprotein factor TFIID. Binding of TFIID to the TATA box is the initial transcriptional step of the pre-initiation complex (PIC), playing a role in the activation of eukaryotic genes transcribed by RNA polymerase II. Members of the TBP family are differentially required for transcription and development during early embryogenesis. Regulates mRNA levels in the early embryo by both transcriptional and post-transcriptional mechanisms. Required for transcription of a subset of genes at the mid-blastula transition (MBT). Negatively regulates the expression of other embryonic genes, including autoregulation of the tbp promoter itself. Also functions within a transcription-dependent mechanism to direct the temporally-regulated degradation of a subset of maternal mRNAs after the MBT. This is part of a general mechanism to regulate the maternal to zygotic transition and is required for normal embryonic development. Binds to promoters of a subset of genes. Required for gastrulation. In Danio rerio (Zebrafish), this protein is TATA-box-binding protein.